The following is a 620-amino-acid chain: Toxin coregulated pilus biosynthesis protein I (620 aa).

The region spanning 344–580 (TMNDLSIKQT…DVAKQMEDIR (237 aa)) is the Methyl-accepting transducer domain.

This sequence belongs to the methyl-accepting chemotaxis (MCP) protein family.

It is found in the cell inner membrane. In terms of biological role, may function as an environmental regulator of TCP biogenesis. Negatively regulates the synthesis of the major pilin subunit of TCP (TcpA). The polypeptide is Toxin coregulated pilus biosynthesis protein I (tcpI) (Vibrio cholerae serotype O1 (strain ATCC 39315 / El Tor Inaba N16961)).